The primary structure comprises 456 residues: Bifunctional protein GlmU (456 aa).

A pyrophosphorylase region spans residues Met1–Lys228. UDP-N-acetyl-alpha-D-glucosamine-binding positions include Leu11 to Gly14, Lys25, Gln75, Gly80 to Thr81, Tyr102 to Asp104, Gly138, Glu153, Asn168, and Asn226. Asp104 is a binding site for Mg(2+). Residue Asn226 participates in Mg(2+) binding. Residues Leu229–Ala249 are linker. Positions Gly250–Gln456 are N-acetyltransferase. The UDP-N-acetyl-alpha-D-glucosamine site is built by Arg332 and Lys350. Catalysis depends on His362, which acts as the Proton acceptor. Residues Tyr365 and Asn376 each contribute to the UDP-N-acetyl-alpha-D-glucosamine site. Residues Ala379, Asn385–Tyr386, Ser404, Ala422, and Arg439 contribute to the acetyl-CoA site.

The protein in the N-terminal section; belongs to the N-acetylglucosamine-1-phosphate uridyltransferase family. It in the C-terminal section; belongs to the transferase hexapeptide repeat family. As to quaternary structure, homotrimer. It depends on Mg(2+) as a cofactor.

The protein localises to the cytoplasm. The enzyme catalyses alpha-D-glucosamine 1-phosphate + acetyl-CoA = N-acetyl-alpha-D-glucosamine 1-phosphate + CoA + H(+). It carries out the reaction N-acetyl-alpha-D-glucosamine 1-phosphate + UTP + H(+) = UDP-N-acetyl-alpha-D-glucosamine + diphosphate. It participates in nucleotide-sugar biosynthesis; UDP-N-acetyl-alpha-D-glucosamine biosynthesis; N-acetyl-alpha-D-glucosamine 1-phosphate from alpha-D-glucosamine 6-phosphate (route II): step 2/2. The protein operates within nucleotide-sugar biosynthesis; UDP-N-acetyl-alpha-D-glucosamine biosynthesis; UDP-N-acetyl-alpha-D-glucosamine from N-acetyl-alpha-D-glucosamine 1-phosphate: step 1/1. It functions in the pathway bacterial outer membrane biogenesis; LPS lipid A biosynthesis. Catalyzes the last two sequential reactions in the de novo biosynthetic pathway for UDP-N-acetylglucosamine (UDP-GlcNAc). The C-terminal domain catalyzes the transfer of acetyl group from acetyl coenzyme A to glucosamine-1-phosphate (GlcN-1-P) to produce N-acetylglucosamine-1-phosphate (GlcNAc-1-P), which is converted into UDP-GlcNAc by the transfer of uridine 5-monophosphate (from uridine 5-triphosphate), a reaction catalyzed by the N-terminal domain. The chain is Bifunctional protein GlmU from Neisseria meningitidis serogroup B (strain ATCC BAA-335 / MC58).